The following is a 266-amino-acid chain: NADP-dependent mannitol dehydrogenase (266 aa).

The NADP(+) site is built by Thr-31, Ile-33, Asn-107, and Arg-140. The active-site Proton donor is the Ser-159. Positions 174, 178, 206, and 208 each coordinate NADP(+). Tyr-174 serves as the catalytic Proton acceptor. Lys-178 acts as the Lowers pKa of active site Tyr in catalysis.

The protein belongs to the short-chain dehydrogenases/reductases (SDR) family. As to quaternary structure, homotetramer.

The protein resides in the vacuole. It catalyses the reaction D-mannitol + NADP(+) = D-fructose + NADPH + H(+). The polypeptide is NADP-dependent mannitol dehydrogenase (Alternaria alternata (Alternaria rot fungus)).